Here is a 275-residue protein sequence, read N- to C-terminus: NVFNALRGSNIEIILDVPLQDLQSLTDPSRANGWVQDNIINHFPDVKFKYIAVGNKVSPGNNGQYAPFVAPAMQNVYNALAAAGLQDQIKVSTATYSGILANTYPPKDSIFRGEFNSFINPIIQFLVQHNLPLLANVYPYFGHIFNTADVPLSYALFTQQEANPAGYQNLFDALLDSMYFAVEKAGGQNVEIIVSESGWPSEGNSAATIENAQTYYENLINHVKSGAGTPKKPGKAIETYLFAMFDENNKEGDITEKHFGLFSPDQRAKYQLNFN.

E196 serves as the catalytic Nucleophile.

This sequence belongs to the glycosyl hydrolase 17 family. In terms of processing, the N-terminus is blocked.

The protein localises to the secreted. The protein resides in the extracellular space. The catalysed reaction is Hydrolysis of (1-&gt;3)-beta-D-glucosidic linkages in (1-&gt;3)-beta-D-glucans.. In terms of biological role, implicated in the defense of plants against pathogens. In Nicotiana tabacum (Common tobacco), this protein is Glucan endo-1,3-beta-glucosidase, acidic isoform PR-N (PRN).